The chain runs to 380 residues: Ceramide synthase 2 (380 aa).

Over M1 to Y40 the chain is Lumenal. An N-linked (GlcNAc...) asparagine glycan is attached at N19. Residues I41 to A61 traverse the membrane as a helical segment. A homeobox-like region spans residues L67–S128. The region spanning K131–T332 is the TLC domain. The next 4 helical transmembrane spans lie at F140–F160, W181–V201, Q209–V229, and I264–I284. Residues Y291–F300 carry the Last loop motif motif. Residues F304–L324 form a helical membrane-spanning segment. Residues R325–D380 lie on the Cytoplasmic side of the membrane. The disordered stretch occupies residues D338–D380. S341 is subject to Phosphoserine. The segment covering E344–E353 has biased composition (acidic residues). At T346 the chain carries Phosphothreonine. A phosphoserine mark is found at S348 and S349.

Interacts with ATP6V0C, ASGR1, ASGR2 and SLC22A1/OCT1. Interacts with ELOV1, HSD17B12 and TECR. Interacts with NDUFS2. Acetylated. Deacetylation by SIRT3 increases enzyme activity and promotes mitochondrial ceramide accumulation. In terms of processing, phosphorylated at the C-terminus by CK2, leading to increase the ceramide synthase activity.

It localises to the endoplasmic reticulum membrane. The enzyme catalyses a very long-chain fatty acyl-CoA + a sphingoid base = an N-(very-long-chain fatty acyl)-sphingoid base + CoA + H(+). It catalyses the reaction docosanoyl-CoA + sphinganine = N-docosanoylsphinganine + CoA + H(+). It carries out the reaction tetracosanoyl-CoA + sphinganine = N-tetracosanoylsphinganine + CoA + H(+). The catalysed reaction is hexacosanoyl-CoA + sphinganine = N-hexacosanoylsphinganine + CoA + H(+). The enzyme catalyses (15Z)-tetracosenoyl-CoA + sphinganine = N-(15Z-tetracosenoyl)-sphinganine + CoA + H(+). It catalyses the reaction 2-hydroxytetracosanoyl-CoA + sphinganine = N-(2-hydroxytetracosanoyl)-sphinganine + CoA + H(+). It carries out the reaction 2-hydroxydocosanoyl-CoA + sphinganine = N-(2-hydroxydocosanoyl)-sphinganine + CoA + H(+). The catalysed reaction is 2-hydroxytetracosenoyl-CoA + sphinganine = N-(2-hydroxytetracosenoyl)-sphinganine + CoA + H(+). The enzyme catalyses tetracosenoyl-CoA + sphinganine = an N-tetracosenoylsphinganine + CoA + H(+). It catalyses the reaction hexacosenoyl-CoA + sphinganine = N-hexacosenoylsphinganine + CoA + H(+). It carries out the reaction tetracosanoyl-CoA + sphing-4-enine = N-tetracosanoyl-sphing-4-enine + CoA + H(+). The catalysed reaction is tetracosenoyl-CoA + sphing-4-enine = N-(tetracosenoyl)-sphing-4-enine + CoA + H(+). The enzyme catalyses heptadecasphing-4-enine + tetracosanoyl-CoA = N-tetracosanoyl-heptadecasphing-4-enine + CoA + H(+). It catalyses the reaction a fatty acyl-CoA + sphing-4-enine = an N-acylsphing-4-enine + CoA + H(+). It carries out the reaction sphing-4-enine + hexadecanoyl-CoA = N-hexadecanoylsphing-4-enine + CoA + H(+). The catalysed reaction is sphing-4-enine + octadecanoyl-CoA = N-octadecanoylsphing-4-enine + CoA + H(+). The enzyme catalyses eicosanoyl-CoA + sphing-4-enine = N-eicosanoyl-sphing-4-enine + CoA + H(+). It catalyses the reaction sphinganine + hexadecanoyl-CoA = N-hexadecanoylsphinganine + CoA + H(+). It carries out the reaction sphinganine + octadecanoyl-CoA = N-(octadecanoyl)-sphinganine + CoA + H(+). The catalysed reaction is sphinganine + (9Z)-octadecenoyl-CoA = N-(9Z-octadecenoyl)-sphinganine + CoA + H(+). The enzyme catalyses eicosanoyl-CoA + sphinganine = N-eicosanoylsphinganine + CoA + H(+). It participates in lipid metabolism; sphingolipid metabolism. With respect to regulation, ceramide synthase activity is inhibited by sphingosine-1-phosphate. Ceramide synthase that catalyzes the transfer of the acyl chain from acyl-CoA to a sphingoid base, with high selectivity toward very-long-chain fatty acyl-CoA (chain length C22-C27). N-acylates sphinganine and sphingosine bases to form dihydroceramides and ceramides in de novo synthesis and salvage pathways, respectively. Plays a non-redundant role in the synthesis of ceramides with very-long-chain fatty acids in kidney, liver and brain. Regulates the abundance of myelin-specific sphingolipids galactosylceramide and sulfatide that affects myelin sheath architecture and motor neuron functions. The chain is Ceramide synthase 2 from Bos taurus (Bovine).